The chain runs to 272 residues: Adenylate kinase (272 aa).

An ATP-binding site is contributed by 55–60; the sequence is GAGKGT. The segment at 75–104 is NMP; that stretch reads ATGDMLRSQVAKKTPLGKEAKKIMDQGGLV. AMP contacts are provided by residues Thr-76, Arg-81, 102–104, 131–134, and Gln-138; these read GLV and GFPR. The LID stretch occupies residues 172 to 209; that stretch reads GRLVHPASGRSYHKIFNPPKQDMKDDITGEPLIQRSDD. Residues Arg-173 and 182–183 each bind ATP; that span reads SY. Residues Arg-206 and Arg-217 each contribute to the AMP site. Position 245 (Gln-245) interacts with ATP.

Belongs to the adenylate kinase family. AK2 subfamily. Monomer.

It localises to the cytoplasm. The protein localises to the cytosol. Its subcellular location is the mitochondrion intermembrane space. The catalysed reaction is AMP + ATP = 2 ADP. In terms of biological role, catalyzes the reversible transfer of the terminal phosphate group between ATP and AMP. Plays an important role in cellular energy homeostasis and in adenine nucleotide metabolism. Adenylate kinase activity is critical for regulation of the phosphate utilization and the AMP de novo biosynthesis pathways. This Talaromyces marneffei (Penicillium marneffei) protein is Adenylate kinase (adk1).